Consider the following 66-residue polypeptide: Large ribosomal subunit protein bL33c (66 aa).

This sequence belongs to the bacterial ribosomal protein bL33 family.

Its subcellular location is the plastid. The protein resides in the chloroplast. This Vitis vinifera (Grape) protein is Large ribosomal subunit protein bL33c.